We begin with the raw amino-acid sequence, 297 residues long: GTP cyclohydrolase FolE2 (297 aa).

2 disordered regions span residues 1–21 (MTHA…SERD) and 180–207 (IRAE…RERP).

It belongs to the GTP cyclohydrolase IV family.

It catalyses the reaction GTP + H2O = 7,8-dihydroneopterin 3'-triphosphate + formate + H(+). It participates in cofactor biosynthesis; 7,8-dihydroneopterin triphosphate biosynthesis; 7,8-dihydroneopterin triphosphate from GTP: step 1/1. In terms of biological role, converts GTP to 7,8-dihydroneopterin triphosphate. In Methylibium petroleiphilum (strain ATCC BAA-1232 / LMG 22953 / PM1), this protein is GTP cyclohydrolase FolE2.